We begin with the raw amino-acid sequence, 141 residues long: ATP synthase epsilon chain 1 (141 aa).

This sequence belongs to the ATPase epsilon chain family. In terms of assembly, F-type ATPases have 2 components, CF(1) - the catalytic core - and CF(0) - the membrane proton channel. CF(1) has five subunits: alpha(3), beta(3), gamma(1), delta(1), epsilon(1). CF(0) has three main subunits: a, b and c.

The protein resides in the cell inner membrane. Produces ATP from ADP in the presence of a proton gradient across the membrane. This Paraburkholderia xenovorans (strain LB400) protein is ATP synthase epsilon chain 1.